We begin with the raw amino-acid sequence, 113 residues long: MLARRNRVTSGADYRIIVRRGRRTTTGTAVVSALAGPDDAPTRFGFIISKKVGNAVTRNLVRRRLKAVSAGLLHSVPPGTSIVIRVLPGMERTAWDTLQEEMASAVTRAVRTI.

Belongs to the RnpA family. As to quaternary structure, consists of a catalytic RNA component (M1 or rnpB) and a protein subunit.

It catalyses the reaction Endonucleolytic cleavage of RNA, removing 5'-extranucleotides from tRNA precursor.. Functionally, RNaseP catalyzes the removal of the 5'-leader sequence from pre-tRNA to produce the mature 5'-terminus. It can also cleave other RNA substrates such as 4.5S RNA. The protein component plays an auxiliary but essential role in vivo by binding to the 5'-leader sequence and broadening the substrate specificity of the ribozyme. The protein is Ribonuclease P protein component of Clavibacter michiganensis subsp. michiganensis (strain NCPPB 382).